Consider the following 360-residue polypeptide: Peptide chain release factor 1 (360 aa).

Position 236 is an N5-methylglutamine (Gln-236).

It belongs to the prokaryotic/mitochondrial release factor family. Post-translationally, methylated by PrmC. Methylation increases the termination efficiency of RF1.

The protein localises to the cytoplasm. Its function is as follows. Peptide chain release factor 1 directs the termination of translation in response to the peptide chain termination codons UAG and UAA. The polypeptide is Peptide chain release factor 1 (Limosilactobacillus fermentum (strain NBRC 3956 / LMG 18251) (Lactobacillus fermentum)).